Here is a 521-residue protein sequence, read N- to C-terminus: Zinc finger and BTB domain-containing protein 18 (521 aa).

Positions 24 to 91 (CDCTVLVGDA…MYEGKLQFKD (68 aa)) constitute a BTB domain. The interval 190-230 (DSASIPQTGGEAETHTAAAGKTADSPCSSTGSLSHRSATSM) is disordered. Residues 197-212 (TGGEAETHTAAAGKTA) are compositionally biased toward low complexity. Polar residues predominate over residues 214-230 (SPCSSTGSLSHRSATSM). 4 consecutive C2H2-type zinc fingers follow at residues 369 to 391 (FMCPLCNKVFPSPHILQIHLSTH), 409 to 431 (PTCSLCGKTFSCMYTLKRHERTH), 437 to 459 (FTCTQCGKSFQYSHNLSRHAVVH), and 465 to 488 (HACKWCERRFTQSGDLYRHIRKFH).

It belongs to the krueppel C2H2-type zinc-finger protein family. ZBTB18 subfamily.

The protein resides in the nucleus. Transcriptional repressor that plays a role in various developmental processes. Specifically binds the consensus DNA sequence 5'-[AC]ACATCTG[GT][AC]-3' which contains the E box core, and acts by recruiting chromatin remodeling multiprotein complexes. This Xenopus tropicalis (Western clawed frog) protein is Zinc finger and BTB domain-containing protein 18 (zbtb18).